Consider the following 102-residue polypeptide: Putative ribosomal protein uL13-like (102 aa).

Belongs to the universal ribosomal protein uL13 family.

This is Putative ribosomal protein uL13-like (RPL13AP3) from Homo sapiens (Human).